We begin with the raw amino-acid sequence, 94 residues long: Enhancer of yellow 2 transcription factor (94 aa).

It belongs to the ENY2 family. In terms of assembly, component of the nuclear pore complex (NPC)-associated AMEX complex (anchoring and mRNA export complex), composed of at least e(y)2 and xmas-2. Component of the SAGA transcription coactivator-HAT complexes, at least composed of Ada2b, e(y)2, Pcaf/Gcn5, Taf10 and Nipped-A/Trrap. Within the SAGA complex, e(y)2, Sgf11, and not/nonstop form an additional subcomplex of SAGA called the DUB module (deubiquitination module). Component of the THO complex, composed of at least e(y)2, HPR1, THO2, THOC5, THOC6 and THOC7. Interacts with e(y)1. Interacts with su(Hw) (via zinc fingers). Interacts with xmas-2; required for localization to the nuclear periphery. Interacts with the nuclear pore complex (NPC).

It localises to the nucleus. The protein localises to the nucleoplasm. Its subcellular location is the cytoplasm. In terms of biological role, involved in mRNA export coupled transcription activation by association with both the AMEX and the SAGA complexes. The SAGA complex is a multiprotein complex that activates transcription by remodeling chromatin and mediating histone acetylation and deubiquitination. Within the SAGA complex, participates in a subcomplex that specifically deubiquitinates histone H2B. The SAGA complex is recruited to specific gene promoters by activators, where it is required for transcription. Required for nuclear receptor-mediated transactivation. Involved in transcription elongation by recruiting the THO complex onto nascent mRNA. The AMEX complex functions in docking export-competent ribonucleoprotein particles (mRNPs) to the nuclear entrance of the nuclear pore complex (nuclear basket). AMEX participates in mRNA export and accurate chromatin positioning in the nucleus by tethering genes to the nuclear periphery. The chain is Enhancer of yellow 2 transcription factor from Drosophila mojavensis (Fruit fly).